A 227-amino-acid chain; its full sequence is Urease accessory protein UreF (227 aa).

Belongs to the UreF family. In terms of assembly, ureD, UreF and UreG form a complex that acts as a GTP-hydrolysis-dependent molecular chaperone, activating the urease apoprotein by helping to assemble the nickel containing metallocenter of UreC. The UreE protein probably delivers the nickel.

It is found in the cytoplasm. Functionally, required for maturation of urease via the functional incorporation of the urease nickel metallocenter. In Shewanella halifaxensis (strain HAW-EB4), this protein is Urease accessory protein UreF.